The primary structure comprises 521 residues: Protein translocase subunit SecD (521 aa).

The next 6 helical transmembrane spans lie at 8–28 (LKLASVLGVCLLGLLLCLPNG), 359–379 (AGILSLGVGFLLVVVFMVLFY), 388–408 (IALLANLVLMVAILSLFEATL), 410–430 (LPGMAGMLLTLGMAVDANILI), 459–479 (IVDSNATAFLAHVMLFVFGTG), and 483–503 (GFALTITIGIATTLFTTLLLS).

The protein belongs to the SecD/SecF family. SecD subfamily. In terms of assembly, forms a complex with SecF. Part of the essential Sec protein translocation apparatus which comprises SecA, SecYEG and auxiliary proteins SecDF-YajC and YidC.

It localises to the cell inner membrane. Part of the Sec protein translocase complex. Interacts with the SecYEG preprotein conducting channel. SecDF uses the proton motive force (PMF) to complete protein translocation after the ATP-dependent function of SecA. The chain is Protein translocase subunit SecD from Acetobacter pasteurianus (strain NBRC 105184 / IFO 3283-01).